Reading from the N-terminus, the 102-residue chain is Type IV secretion system protein PtlA homolog (102 aa).

A signal peptide spans 1–31; that stretch reads MNRLKDLGTPRPRLAFMAACILLLATLPDFA. 2 helical membrane-spanning segments follow: residues 45 to 65 and 77 to 97; these read AGIVTVLRGASVATVTIAIIW and VLDVVRVVLAGLLIGASAEIA.

The protein belongs to the PtlA family.

The protein resides in the cell membrane. This chain is Type IV secretion system protein PtlA homolog (ptlA), found in Bordetella bronchiseptica (strain ATCC BAA-588 / NCTC 13252 / RB50) (Alcaligenes bronchisepticus).